We begin with the raw amino-acid sequence, 180 residues long: Large ribosomal subunit protein uL5 (180 aa).

This sequence belongs to the universal ribosomal protein uL5 family. Part of the 50S ribosomal subunit; part of the 5S rRNA/L5/L18/L25 subcomplex. Contacts the 5S rRNA and the P site tRNA. Forms a bridge to the 30S subunit in the 70S ribosome.

This is one of the proteins that bind and probably mediate the attachment of the 5S RNA into the large ribosomal subunit, where it forms part of the central protuberance. In the 70S ribosome it contacts protein S13 of the 30S subunit (bridge B1b), connecting the 2 subunits; this bridge is implicated in subunit movement. Contacts the P site tRNA; the 5S rRNA and some of its associated proteins might help stabilize positioning of ribosome-bound tRNAs. In Xanthomonas euvesicatoria pv. vesicatoria (strain 85-10) (Xanthomonas campestris pv. vesicatoria), this protein is Large ribosomal subunit protein uL5.